The sequence spans 363 residues: Fructose-bisphosphate aldolase A (363 aa).

Beta-D-fructose 1,6-bisphosphate is bound at residue Arg43. The active-site Proton acceptor is the Glu188. Catalysis depends on Lys230, which acts as the Schiff-base intermediate with dihydroxyacetone-P. Beta-D-fructose 1,6-bisphosphate-binding positions include 272 to 274, Ser301, and Arg304; that span reads SGG.

This sequence belongs to the class I fructose-bisphosphate aldolase family. As to quaternary structure, tetramer.

It catalyses the reaction beta-D-fructose 1,6-bisphosphate = D-glyceraldehyde 3-phosphate + dihydroxyacetone phosphate. It functions in the pathway carbohydrate degradation; glycolysis; D-glyceraldehyde 3-phosphate and glycerone phosphate from D-glucose: step 4/4. Functionally, plays a key role in glycolysis and gluconeogenesis. The polypeptide is Fructose-bisphosphate aldolase A (Salmo salar (Atlantic salmon)).